Here is a 148-residue protein sequence, read N- to C-terminus: uncharacterized protein (148 aa).

It belongs to the serpin family. Poxviruses subfamily.

This is an uncharacterized protein from Fowlpox virus (strain NVSL) (FPV).